The following is a 911-amino-acid chain: General transcription factor 3C polypeptide 2 (911 aa).

2 disordered regions span residues Asp-24 to Ala-187 and Ala-205 to Asn-297. The segment covering Asp-35–Glu-46 has biased composition (polar residues). At Ser-63 the chain carries Phosphoserine. Residues Pro-64–Gln-81 show a composition bias toward basic and acidic residues. Over residues Ser-92 to Lys-112 the composition is skewed to basic residues. Over residues Pro-114–Pro-123 the composition is skewed to pro residues. Ser-132, Ser-165, Ser-167, Ser-220, and Ser-260 each carry phosphoserine. The segment covering Glu-253–Gly-262 has biased composition (acidic residues). The segment covering Pro-263–Ser-277 has biased composition (low complexity). WD repeat units lie at residues Pro-366–Thr-426, His-427–Leu-483, Pro-484–Val-535, Gln-536–Leu-603, Tyr-604–Lys-654, and Arg-655–Asp-690. Ser-597 carries the phosphoserine modification. The segment at Ser-765–Arg-785 is disordered. Residues Ser-871, Ser-892, and Ser-893 each carry the phosphoserine modification. The disordered stretch occupies residues Phe-889–Pro-911. A Phosphothreonine modification is found at Thr-895. Ser-901 bears the Phosphoserine mark.

As to quaternary structure, part of the TFIIIC subcomplex TFIIIC2, consisting of six subunits, GTF3C1, GTF3C2, GTF3C3, GTF3C4, GTF3C5 and GTF3C6.

Its subcellular location is the nucleus. Its function is as follows. Required for RNA polymerase III-mediated transcription. Component of TFIIIC that initiates transcription complex assembly on tRNA and is required for transcription of 5S rRNA and other stable nuclear and cytoplasmic RNAs. May play a direct role in stabilizing interactions of TFIIIC2 with TFIIIC1. This chain is General transcription factor 3C polypeptide 2 (GTF3C2), found in Homo sapiens (Human).